A 551-amino-acid chain; its full sequence is Monocarboxylic acid transporter (551 aa).

Helical transmembrane passes span 18-38 (NPILNISVFVVFIIVTMTVVL), 63-83 (GLAIAGDYLSAASFLGIVGAI), 90-110 (GFLYSIGFFVAWLVALLLVAE), 144-164 (VTLFYLIAQMAGAGSLVSVLL), 171-191 (WQAVVVGIVGIVMIAYVLLGG), 203-223 (AVLLVGGVAIMTVLTFVKVSG), 267-287 (LDFISLALALCLGTAGLPHVL), 307-327 (IVLIGAFYLMTLVLGYGAAAL), 355-375 (IFMALISAVAFATVLAVVAGL), 411-431 (VVIGLISIVLGILAMTQNVAF), 432-452 (LVALAFAVAASANLPTILYSL), 463-483 (VAAIYTGLISALLLIFLSPAV), and 503-523 (NPGLVSIPLAFIAGWIGTLVG).

The protein belongs to the sodium:solute symporter (SSF) (TC 2.A.21) family.

The protein resides in the cell membrane. Acts as a secondary carrier for acetate, propionate and pyruvate. Has high affinity for acetate and propionate and lower affinity for pyruvate. Driven by the electrochemical proton potential. The polypeptide is Monocarboxylic acid transporter (Corynebacterium glutamicum (strain ATCC 13032 / DSM 20300 / JCM 1318 / BCRC 11384 / CCUG 27702 / LMG 3730 / NBRC 12168 / NCIMB 10025 / NRRL B-2784 / 534)).